Consider the following 305-residue polypeptide: Undecaprenyl-diphosphatase (305 aa).

A run of 8 helical transmembrane segments spans residues 18–38 (GVTE…PALV), 55–75 (YLAF…VFFW), 103–123 (WLIV…EQLF), 130–150 (PVPA…GEVL), 187–207 (GVLI…RSGI), 225–245 (FSFL…IPEL), 246–266 (FGPL…ASFV), and 284–304 (LTPF…WLAL).

The protein belongs to the UppP family.

The protein localises to the cell membrane. It catalyses the reaction di-trans,octa-cis-undecaprenyl diphosphate + H2O = di-trans,octa-cis-undecaprenyl phosphate + phosphate + H(+). Its function is as follows. Catalyzes the dephosphorylation of undecaprenyl diphosphate (UPP). Confers resistance to bacitracin. In Mycolicibacterium paratuberculosis (strain ATCC BAA-968 / K-10) (Mycobacterium paratuberculosis), this protein is Undecaprenyl-diphosphatase.